Here is a 532-residue protein sequence, read N- to C-terminus: Di/tripeptide-binding protein 2 (532 aa).

The first 24 residues, 1 to 24 (MRPRSALRYSLLLLAFAASAAIQA), serve as a signal peptide directing secretion.

This sequence belongs to the bacterial solute-binding protein 5 family. In terms of assembly, the complex is composed of two ATP-binding proteins (DppD and DppF), two transmembrane proteins (DppB and DppC) and a solute-binding protein (DppA2). Five orthologous SBPs (DppA1-A5) are present in P.aeruginosa, which increases the substrate specificity of the DppBCDF transporter.

Its function is as follows. Part of the ABC transporter DppABCDF involved in the uptake of various di/tripeptides. Shows high flexibility on substrate recognition. Efficiently uses tripeptides. The protein is Di/tripeptide-binding protein 2 of Pseudomonas aeruginosa (strain UCBPP-PA14).